The following is a 597-amino-acid chain: Ran-binding protein 9 (597 aa).

Positions 29–216 (LNQRLRRLYP…VDANFGQHPF (188 aa)) constitute a B30.2/SPRY domain. Residues 247–279 (WQAMIQKMVASYLVHHSYCATAEAFAKSTDQAV) enclose the LisH domain. In terms of domain architecture, CTLH spans 285–342 (SIKNRQKIQKLVLSGRMGEAIETTQQLYPSLLERNPDLLFMLKVRQFIEMVNGTDSEV). Disordered regions lie at residues 343-375 (RCLG…SSQA), 389-417 (SSSK…VLNG), and 437-475 (SNGV…QSKR). The span at 438-456 (NGVSESSSNGFLNGSSTHG) shows a compositional bias: polar residues. Acidic residues predominate over residues 459–468 (QEDCDADMEV).

This sequence belongs to the RANBP9/10 family. As to quaternary structure, identified in the CTLH complex that contains at least MAEA, RMND5A (or alternatively its paralog RMND5B), GID8, WDR26, and RANBP9 and/or RANBP10.

It localises to the cytoplasm. The protein localises to the cell membrane. It is found in the nucleus. In terms of biological role, may act as scaffolding protein, and as adapter protein to couple membrane receptors to intracellular signaling pathways. Acts as a mediator of cell spreading and actin cytoskeleton rearrangement. Core component of the CTLH E3 ubiquitin-protein ligase complex that mediates ubiquitination and subsequent proteasomal degradation of target proteins. The sequence is that of Ran-binding protein 9 (ranbp9) from Danio rerio (Zebrafish).